The sequence spans 282 residues: Acetylglutamate kinase (282 aa).

Residues 62-63, arginine 84, and asparagine 178 contribute to the substrate site; that span reads GG. L-arginine-binding positions include lysine 196, serine 214, and 266–269; that span reads EIFS.

Homohexamer.

Its subcellular location is the cytoplasm. It carries out the reaction N-acetyl-L-glutamate + ATP = N-acetyl-L-glutamyl 5-phosphate + ADP. The protein operates within amino-acid biosynthesis; L-arginine biosynthesis; N(2)-acetyl-L-ornithine from L-glutamate: step 2/4. Its activity is regulated as follows. Allosterically inhibited by arginine. Functionally, catalyzes the ATP-dependent phosphorylation of N-acetyl-L-glutamate. The sequence is that of Acetylglutamate kinase from Thermotoga maritima (strain ATCC 43589 / DSM 3109 / JCM 10099 / NBRC 100826 / MSB8).